A 484-amino-acid chain; its full sequence is UDP-N-acetylmuramate--L-alanine ligase (484 aa).

Residue 125-131 (GTHGKTT) coordinates ATP.

It belongs to the MurCDEF family.

It localises to the cytoplasm. It carries out the reaction UDP-N-acetyl-alpha-D-muramate + L-alanine + ATP = UDP-N-acetyl-alpha-D-muramoyl-L-alanine + ADP + phosphate + H(+). The protein operates within cell wall biogenesis; peptidoglycan biosynthesis. Cell wall formation. The polypeptide is UDP-N-acetylmuramate--L-alanine ligase (Buchnera aphidicola subsp. Acyrthosiphon pisum (strain Tuc7)).